Reading from the N-terminus, the 209-residue chain is MTLAKEIARDLLKIKAVYLKPEEPFTWASGIKSPIYTDNRVTLAYPETRTLIEDGFVEKIQAEFPDVEVIAGTATAGIPHGAIIADKMNLPFAYIRSKPKDHGAGNQIEGRVAPGQKMVVIEDLISTGGSVLDAIAAAKREGADVIGAAAIFTYELPKAEKNFNEAGVKLVTLSNYTELITLAEAEGYVSPEGLALLEKFKHDQENWQA.

Residues Arg96, Lys100, His102, and 122–130 (EDLISTGGS) contribute to the 5-phospho-alpha-D-ribose 1-diphosphate site. Orotate is bound at residue Ser126.

The protein belongs to the purine/pyrimidine phosphoribosyltransferase family. PyrE subfamily. As to quaternary structure, homodimer. Mg(2+) serves as cofactor.

The enzyme catalyses orotidine 5'-phosphate + diphosphate = orotate + 5-phospho-alpha-D-ribose 1-diphosphate. It participates in pyrimidine metabolism; UMP biosynthesis via de novo pathway; UMP from orotate: step 1/2. Functionally, catalyzes the transfer of a ribosyl phosphate group from 5-phosphoribose 1-diphosphate to orotate, leading to the formation of orotidine monophosphate (OMP). The polypeptide is Orotate phosphoribosyltransferase (Streptococcus sanguinis (strain SK36)).